We begin with the raw amino-acid sequence, 735 residues long: Disintegrin and metalloproteinase domain-containing protein 2 (735 aa).

A signal peptide spans 1 to 18 (MWLILLLLSGLSELGGLS). The propeptide occupies 19–180 (QSQTEGTREK…YKIRSIKPQR (162 aa)). Residues 19–686 (QSQTEGTREK…ASAYRSKSPR (668 aa)) lie on the Extracellular side of the membrane. Residues Asn128, Asn226, and Asn279 are each glycosylated (N-linked (GlcNAc...) asparagine). The Peptidase M12B domain occupies 184–381 (HYLEIHIVVE…QSSHCLQNQP (198 aa)). 4 disulfides stabilise this stretch: Cys293–Cys376, Cys335–Cys360, Cys337–Cys342, and Cys449–Cys469. N-linked (GlcNAc...) asparagine glycans are attached at residues Asn359, Asn463, Asn489, Asn569, and Asn585. Residues 389 to 476 (MAVCGNGEVE…EVCEDFFVQN (88 aa)) enclose the Disintegrin domain. The EGF-like domain maps to 615-648 (LGYDCNLEKCNHHGVCNNKKNCHCDPTYLPPDCK). Cystine bridges form between Cys619-Cys630, Cys624-Cys636, and Cys638-Cys647. A helical membrane pass occupies residues 687–707 (WPFFLIIPFYVVILVLIGMLV). At 708–735 (KVYSQRMKWRMDDFSSEEQFESESESKD) the chain is on the cytoplasmic side. At Ser729 the chain carries Phosphoserine.

Heterodimer with ADAM1/fertilin subunit alpha. In terms of processing, the signal and the metalloprotease domain are cleaved during the epididymal maturation of the spermatozoa. In terms of tissue distribution, expressed in the testis and testicular sperm (at protein level).

The protein localises to the membrane. Its function is as follows. Sperm surface membrane protein that may be involved in sperm-egg plasma membrane adhesion and fusion during fertilization. Could have a direct role in sperm-zona binding or migration of sperm from the uterus into the oviduct. Interactions with egg membrane could be mediated via binding between its disintegrin-like domain to one or more integrins receptors on the egg. This is a non catalytic metalloprotease-like protein. This Mus musculus (Mouse) protein is Disintegrin and metalloproteinase domain-containing protein 2.